The following is a 433-amino-acid chain: UDP-N-acetylglucosamine 1-carboxyvinyltransferase (433 aa).

Residue 34–35 (KN) coordinates phosphoenolpyruvate. R104 contacts UDP-N-acetyl-alpha-D-glucosamine. The active-site Proton donor is the C128. A 2-(S-cysteinyl)pyruvic acid O-phosphothioketal modification is found at C128. UDP-N-acetyl-alpha-D-glucosamine contacts are provided by D320 and I342.

Belongs to the EPSP synthase family. MurA subfamily.

The protein resides in the cytoplasm. It catalyses the reaction phosphoenolpyruvate + UDP-N-acetyl-alpha-D-glucosamine = UDP-N-acetyl-3-O-(1-carboxyvinyl)-alpha-D-glucosamine + phosphate. Its pathway is cell wall biogenesis; peptidoglycan biosynthesis. Functionally, cell wall formation. Adds enolpyruvyl to UDP-N-acetylglucosamine. In Synechococcus sp. (strain CC9605), this protein is UDP-N-acetylglucosamine 1-carboxyvinyltransferase.